The following is a 142-amino-acid chain: Calmodulin-alpha (142 aa).

Position 2 is an N-acetylalanine (Ala-2). EF-hand domains follow at residues 8–43, 44–79, 81–116, and 117–142; these read EQIAEFKEAFSLFDKDGDGTITTKELGTVMRSLGQN, PTEAELQDMINEVDADGNGTIDFPEFLTMMARKMKD, DSEEEIREAFRVFDKDGNGYISAAELRHVMTNLGEK, and LTDEEVDEMIREADIDGDGQVNYEEF. The Ca(2+) site is built by Asp-21, Asp-23, Asp-25, Thr-27, Glu-32, Asp-57, Asp-59, Asn-61, Thr-63, Glu-68, Asp-94, Asp-96, Asn-98, Tyr-100, and Glu-105. The residue at position 116 (Lys-116) is an N6,N6,N6-trimethyllysine. Ca(2+)-binding residues include Asp-130, Asp-132, Asp-134, Gln-136, and Glu-141.

Belongs to the calmodulin family.

Calmodulin mediates the control of a large number of enzymes, ion channels and other proteins by Ca(2+). Among the enzymes to be stimulated by the calmodulin-Ca(2+) complex are a number of protein kinases and phosphatases. This Arbacia punctulata (Punctuate sea urchin) protein is Calmodulin-alpha.